The chain runs to 558 residues: Putative transport protein VC0395_A0715/VC395_1212 (558 aa).

The next 5 membrane-spanning stretches (helical) occupy residues 5–25 (VVLLLEQNPILLIFVVLAIGL), 37–57 (LGNSIGVLITSLIMGHLGFSF), 66–86 (FMLFIYCVGIEAGPNFFGIFF), 92–112 (YLILSLVVLITATWIAYFGGY), and 164–184 (VGYAMAYLIGLISMIMFAKLL). RCK C-terminal domains are found at residues 203 to 290 (RGLG…FRNG) and 291 to 374 (KEVF…KIGF). 6 consecutive transmembrane segments (helical) span residues 384-404 (LLAFCSFFILGILFGLVTMTF), 407-427 (VSFSLGNAVGLLLSGITLGFL), 441-461 (ALNMVKDLGLAIFMVGIGLNA), 476-496 (VIGLAFLVSVVPVVFAYLVGA), 504-524 (ALLFGAIIGARTCAPAMDVVN), and 537-557 (AGTYAIANILMTLTGTIFILL).

It belongs to the AAE transporter (TC 2.A.81) family. YbjL subfamily.

It is found in the cell membrane. In Vibrio cholerae serotype O1 (strain ATCC 39541 / Classical Ogawa 395 / O395), this protein is Putative transport protein VC0395_A0715/VC395_1212.